A 3587-amino-acid chain; its full sequence is Surfactin synthase subunit 1 (3587 aa).

Carrier domains follow at residues 971–1046 (APRN…DHRE), 2010–2085 (APRN…ASAE), and 3038–3112 (APTT…ERAE). 3 positions are modified to O-(pantetheine 4'-phosphoryl)serine: S1006, S2045, and S3073.

It belongs to the ATP-dependent AMP-binding enzyme family. It depends on pantetheine 4'-phosphate as a cofactor.

Its pathway is antibiotic biosynthesis; surfactin biosynthesis. This protein is a multifunctional enzyme able to activate and polymerize the amino acids Leu, Glu, Asp and Val. Activation sites for these AA consist of individual domains. This is Surfactin synthase subunit 1 (srfAA) from Bacillus subtilis (strain 168).